We begin with the raw amino-acid sequence, 252 residues long: Probable ABC transporter ATP-binding protein p29 (252 aa).

The region spanning Leu8 to Asp252 is the ABC transporter domain. Gly42–Ser49 is an ATP binding site.

It belongs to the ABC transporter superfamily.

Its function is as follows. Part of a high-affinity transport system. The sequence is that of Probable ABC transporter ATP-binding protein p29 from Mesomycoplasma hyorhinis (Mycoplasma hyorhinis).